The following is a 125-amino-acid chain: Glutamyl-tRNA(Gln) amidotransferase subunit C, mitochondrial (125 aa).

It belongs to the GatC family. Subunit of the heterotrimeric GatCAB amidotransferase (AdT) complex, composed of A, B and C subunits.

It is found in the mitochondrion. The catalysed reaction is L-glutamyl-tRNA(Gln) + L-glutamine + ATP + H2O = L-glutaminyl-tRNA(Gln) + L-glutamate + ADP + phosphate + H(+). In terms of biological role, allows the formation of correctly charged Gln-tRNA(Gln) through the transamidation of misacylated Glu-tRNA(Gln) in the mitochondria. The reaction takes place in the presence of glutamine and ATP through an activated gamma-phospho-Glu-tRNA(Gln). The chain is Glutamyl-tRNA(Gln) amidotransferase subunit C, mitochondrial from Drosophila mojavensis (Fruit fly).